Consider the following 104-residue polypeptide: NADH-ubiquinone oxidoreductase 12 kDa subunit, mitochondrial (104 aa).

This sequence belongs to the complex I NDUFS6 subunit family. In terms of assembly, complex I is composed of about 40 different subunits.

The protein resides in the mitochondrion inner membrane. In terms of biological role, accessory subunit of the mitochondrial membrane respiratory chain NADH dehydrogenase (Complex I), that is believed not to be involved in catalysis. Complex I functions in the transfer of electrons from NADH to the respiratory chain. The immediate electron acceptor for the enzyme is believed to be ubiquinone. The polypeptide is NADH-ubiquinone oxidoreductase 12 kDa subunit, mitochondrial (nuo-12.3) (Neurospora crassa (strain ATCC 24698 / 74-OR23-1A / CBS 708.71 / DSM 1257 / FGSC 987)).